Here is a 222-residue protein sequence, read N- to C-terminus: Voltage-dependent calcium channel gamma-1 subunit (222 aa).

Residues 1 to 10 lie on the Cytoplasmic side of the membrane; it reads MSPTEAPKVR. The helical transmembrane segment at 11–29 threads the bilayer; that stretch reads VTLFCILVGIVLAMTAVVS. Topologically, residues 30 to 108 are extracellular; the sequence is DHWAVLSPHM…TQKEYSISAA (79 aa). N-linked (GlcNAc...) asparagine glycosylation is found at Asn-43 and Asn-79. Cysteines 57 and 80 form a disulfide. The chain crosses the membrane as a helical span at residues 109 to 129; that stretch reads AISVFSLGFLIMGTICALMAF. The Cytoplasmic portion of the chain corresponds to 130-134; the sequence is RKKRD. The chain crosses the membrane as a helical span at residues 135–155; it reads YLLRPASMFYVFAGLCLFVSL. The Extracellular portion of the chain corresponds to 156 to 179; it reads EVMRQSVKRMIDSEDTVWIEYYYS. A helical transmembrane segment spans residues 180–204; the sequence is WSFACACAAFVLLFLGGISLLLFSL. The Cytoplasmic portion of the chain corresponds to 205–222; sequence PRMPQNPWESCMDAEPEH.

The protein belongs to the PMP-22/EMP/MP20 family. CACNG subfamily. As to quaternary structure, component of a calcium channel complex consisting of a pore-forming alpha subunit (CACNA1S) and the ancillary subunits CACNB1 or CACNB2, CACNG1 and CACNA2D1. The channel complex contains alpha, beta, gamma and delta subunits in a 1:1:1:1 ratio, i.e. it contains either CACNB1 or CACNB2. N-glycosylated. Skeletal muscle (at protein level).

The protein resides in the cell membrane. The protein localises to the sarcolemma. Its function is as follows. Regulatory subunit of the voltage-gated calcium channel that gives rise to L-type calcium currents in skeletal muscle. Regulates channel inactivation kinetics. The polypeptide is Voltage-dependent calcium channel gamma-1 subunit (CACNG1) (Oryctolagus cuniculus (Rabbit)).